Reading from the N-terminus, the 490-residue chain is Cytochrome P450 2C8 (490 aa).

S100, N204, and R241 together coordinate substrate. Phosphoserine is present on S100. C435 contributes to the heme binding site.

It belongs to the cytochrome P450 family. It depends on heme as a cofactor.

It is found in the endoplasmic reticulum membrane. The protein localises to the microsome membrane. It carries out the reaction an organic molecule + reduced [NADPH--hemoprotein reductase] + O2 = an alcohol + oxidized [NADPH--hemoprotein reductase] + H2O + H(+). The catalysed reaction is (5Z,8Z,11Z,14Z)-eicosatetraenoate + reduced [NADPH--hemoprotein reductase] + O2 = (11R,12S)-epoxy-(5Z,8Z,14Z)-eicosatrienoate + oxidized [NADPH--hemoprotein reductase] + H2O + H(+). The enzyme catalyses (5Z,8Z,11Z,14Z)-eicosatetraenoate + reduced [NADPH--hemoprotein reductase] + O2 = (11S,12R)-epoxy-(5Z,8Z,14Z)-eicosatrienoate + oxidized [NADPH--hemoprotein reductase] + H2O + H(+). It catalyses the reaction (5Z,8Z,11Z,14Z)-eicosatetraenoate + reduced [NADPH--hemoprotein reductase] + O2 = (14R,15S)-epoxy-(5Z,8Z,11Z)-eicosatrienoate + oxidized [NADPH--hemoprotein reductase] + H2O + H(+). It carries out the reaction (5Z,8Z,11Z,14Z)-eicosatetraenoate + reduced [NADPH--hemoprotein reductase] + O2 = (14S,15R)-epoxy-(5Z,8Z,11Z)-eicosatrienoate + oxidized [NADPH--hemoprotein reductase] + H2O + H(+). The catalysed reaction is (5Z,8Z,11Z,14Z,17Z)-eicosapentaenoate + reduced [NADPH--hemoprotein reductase] + O2 = 11,12-epoxy-(5Z,8Z,14Z,17Z)-eicosatetraenoate + oxidized [NADPH--hemoprotein reductase] + H2O + H(+). The enzyme catalyses (5Z,8Z,11Z,14Z,17Z)-eicosapentaenoate + reduced [NADPH--hemoprotein reductase] + O2 = 14,15-epoxy-(5Z,8Z,11Z,17Z)-eicosatetraenoate + oxidized [NADPH--hemoprotein reductase] + H2O + H(+). It catalyses the reaction (5Z,8Z,11Z,14Z,17Z)-eicosapentaenoate + reduced [NADPH--hemoprotein reductase] + O2 = (17R,18S)-epoxy-(5Z,8Z,11Z,14Z)-eicosatetraenoate + oxidized [NADPH--hemoprotein reductase] + H2O + H(+). It carries out the reaction (5Z,8Z,11Z,14Z,17Z)-eicosapentaenoate + reduced [NADPH--hemoprotein reductase] + O2 = (17S,18R)-epoxy-(5Z,8Z,11Z,14Z)-eicosatetraenoate + oxidized [NADPH--hemoprotein reductase] + H2O + H(+). The catalysed reaction is (4Z,7Z,10Z,13Z,16Z,19Z)-docosahexaenoate + reduced [NADPH--hemoprotein reductase] + O2 = (19R,20S)-epoxy-(4Z,7Z,10Z,13Z,16Z)-docosapentaenoate + oxidized [NADPH--hemoprotein reductase] + H2O + H(+). The enzyme catalyses (4Z,7Z,10Z,13Z,16Z,19Z)-docosahexaenoate + reduced [NADPH--hemoprotein reductase] + O2 = (19S,20R)-epoxy-(4Z,7Z,10Z,13Z,16Z)-docosapentaenoate + oxidized [NADPH--hemoprotein reductase] + H2O + H(+). It catalyses the reaction all-trans-retinoate + reduced [NADPH--hemoprotein reductase] + O2 = all-trans-4-hydroxyretinoate + oxidized [NADPH--hemoprotein reductase] + H2O + H(+). It carries out the reaction 17beta-estradiol + reduced [NADPH--hemoprotein reductase] + O2 = 16alpha,17beta-estriol + oxidized [NADPH--hemoprotein reductase] + H2O + H(+). The catalysed reaction is estrone + reduced [NADPH--hemoprotein reductase] + O2 = 16alpha-hydroxyestrone + oxidized [NADPH--hemoprotein reductase] + H2O + H(+). It participates in steroid metabolism. The protein operates within lipid metabolism; arachidonate metabolism. Its pathway is cofactor metabolism; retinol metabolism. In terms of biological role, a cytochrome P450 monooxygenase involved in the metabolism of various endogenous substrates, including fatty acids, steroid hormones and vitamins. Mechanistically, uses molecular oxygen inserting one oxygen atom into a substrate, and reducing the second into a water molecule, with two electrons provided by NADPH via cytochrome P450 reductase (NADPH--hemoprotein reductase). Primarily catalyzes the epoxidation of double bonds of polyunsaturated fatty acids (PUFA) with a preference for the last double bond. Catalyzes the hydroxylation of carbon-hydrogen bonds. Metabolizes all trans-retinoic acid toward its 4-hydroxylated form. Displays 16-alpha hydroxylase activity toward estrogen steroid hormones, 17beta-estradiol (E2) and estrone (E1). Plays a role in the oxidative metabolism of xenobiotics. It is the principal enzyme responsible for the metabolism of the anti-cancer drug paclitaxel (taxol). In Homo sapiens (Human), this protein is Cytochrome P450 2C8.